A 697-amino-acid chain; its full sequence is Elongation factor G (697 aa).

The tr-type G domain maps to 10-290 (THFRNIGIAA…AVVDYLPSPL (281 aa)). GTP contacts are provided by residues 19-26 (AHIDAGKT), 89-93 (DTPGH), and 143-146 (NKMD).

Belongs to the TRAFAC class translation factor GTPase superfamily. Classic translation factor GTPase family. EF-G/EF-2 subfamily.

It localises to the cytoplasm. In terms of biological role, catalyzes the GTP-dependent ribosomal translocation step during translation elongation. During this step, the ribosome changes from the pre-translocational (PRE) to the post-translocational (POST) state as the newly formed A-site-bound peptidyl-tRNA and P-site-bound deacylated tRNA move to the P and E sites, respectively. Catalyzes the coordinated movement of the two tRNA molecules, the mRNA and conformational changes in the ribosome. The chain is Elongation factor G from Deinococcus deserti (strain DSM 17065 / CIP 109153 / LMG 22923 / VCD115).